A 393-amino-acid polypeptide reads, in one-letter code: LL-diaminopimelate aminotransferase (393 aa).

Substrate-binding residues include Tyr14 and Gly41. Residues Tyr71, 104–105, Tyr128, Asn174, Tyr205, and 233–235 each bind pyridoxal 5'-phosphate; these read AK and SFS. Positions 105, 128, and 174 each coordinate substrate. Lys236 bears the N6-(pyridoxal phosphate)lysine mark. Arg244 and Asn275 together coordinate pyridoxal 5'-phosphate. Positions 275 and 369 each coordinate substrate.

Belongs to the class-I pyridoxal-phosphate-dependent aminotransferase family. LL-diaminopimelate aminotransferase subfamily. In terms of assembly, homodimer. Requires pyridoxal 5'-phosphate as cofactor.

It catalyses the reaction (2S,6S)-2,6-diaminopimelate + 2-oxoglutarate = (S)-2,3,4,5-tetrahydrodipicolinate + L-glutamate + H2O + H(+). It functions in the pathway amino-acid biosynthesis; L-lysine biosynthesis via DAP pathway; LL-2,6-diaminopimelate from (S)-tetrahydrodipicolinate (aminotransferase route): step 1/1. In terms of biological role, involved in the synthesis of meso-diaminopimelate (m-DAP or DL-DAP), required for both lysine and peptidoglycan biosynthesis. Catalyzes the direct conversion of tetrahydrodipicolinate to LL-diaminopimelate. This is LL-diaminopimelate aminotransferase from Chlamydia muridarum (strain MoPn / Nigg).